We begin with the raw amino-acid sequence, 360 residues long: SPRY domain-containing SOCS box protein 3 (360 aa).

The segment at 21 to 54 (DQDGRSPALHAEEEAWGYDSDGQHSNSDSDTDLL) is disordered. In terms of domain architecture, B30.2/SPRY spans 84–274 (SLHPFRQIKS…MKVIRSCCCR (191 aa)). An SOCS box domain is found at 264-315 (SMKVIRSCCCRTSLQYLCCARLRQLLPGSVDSLEVLPLPPGLKQVLSNKLGW). Positions 322–350 (NRSSQHKGDGSATTSCGSYSDSSCTPGHD) are disordered. A compositionally biased stretch (polar residues) spans 332-346 (SATTSCGSYSDSSCT).

Belongs to the SPSB family. In terms of assembly, substrate-recognition component of the ECS(SPSB3) complex, composed of spsb3, cul5, elob, elob and rnf7/rbx2.

The protein localises to the nucleus. The protein operates within protein modification; protein ubiquitination. Its function is as follows. Substrate-recognition component of a cullin-5-RING E3 ubiquitin-protein ligase complex (ECS complex, also named CRL5 complex), which mediates the ubiquitination and subsequent proteasomal degradation of target proteins. The chain is SPRY domain-containing SOCS box protein 3 (spsb3) from Xenopus laevis (African clawed frog).